The chain runs to 236 residues: Uridylate kinase (236 aa).

8–11 contacts ATP; that stretch reads KLSG. Residues 16–21 are involved in allosteric activation by GTP; that stretch reads GEQGYG. Positions 51 and 55 each coordinate ATP. Residues Asp70 and 131-138 contribute to the UMP site; that span reads TGNPYFST. Positions 159, 165, and 168 each coordinate ATP.

It belongs to the UMP kinase family. As to quaternary structure, homohexamer.

The protein localises to the cytoplasm. The enzyme catalyses UMP + ATP = UDP + ADP. The protein operates within pyrimidine metabolism; CTP biosynthesis via de novo pathway; UDP from UMP (UMPK route): step 1/1. With respect to regulation, allosterically activated by GTP. Inhibited by UTP. Functionally, catalyzes the reversible phosphorylation of UMP to UDP. This is Uridylate kinase from Shouchella clausii (strain KSM-K16) (Alkalihalobacillus clausii).